A 207-amino-acid polypeptide reads, in one-letter code: Ribonuclease HII (207 aa).

Positions 12–201 (DLVAGVDEVG…VRAAWEAREG (190 aa)) constitute an RNase H type-2 domain. 3 residues coordinate a divalent metal cation: Asp-18, Glu-19, and Asp-110.

Belongs to the RNase HII family. Requires Mn(2+) as cofactor. The cofactor is Mg(2+).

Its subcellular location is the cytoplasm. It carries out the reaction Endonucleolytic cleavage to 5'-phosphomonoester.. In terms of biological role, endonuclease that specifically degrades the RNA of RNA-DNA hybrids. This chain is Ribonuclease HII, found in Pseudomonas putida (strain ATCC 47054 / DSM 6125 / CFBP 8728 / NCIMB 11950 / KT2440).